Consider the following 619-residue polypeptide: TOX high mobility group box family member 4 (619 aa).

Disordered regions lie at residues 155 to 227 (LSLG…QKPV), 304 to 335 (ELDP…TESP), and 436 to 458 (LPPP…QQQV). Threonine 176 carries the post-translational modification Phosphothreonine. 2 positions are modified to phosphoserine: serine 178 and serine 182. Basic and acidic residues predominate over residues 183-193 (LHEDGVDDFRR). Residues 208 to 218 (KQKAPKKRKKK) are compositionally biased toward basic residues. The short motif at 213–218 (KKRKKK) is the Nuclear localization signal element. A DNA-binding region (HMG box) is located at residues 223–291 (PQKPVSAYAL…EYLKALAAYK (69 aa)). Threonine 313 carries the phosphothreonine modification. Serine 315 bears the Phosphoserine mark. Residues 320 to 335 (TTADPASPAPASTESP) are compositionally biased toward low complexity. Over residues 436–453 (LPPPRLQPPPLQQMPQPP) the composition is skewed to pro residues. Arginine 479 carries the post-translational modification Asymmetric dimethylarginine. A phosphoserine mark is found at serine 531, serine 548, serine 550, serine 558, serine 560, and serine 565.

As to quaternary structure, component of the PNUTS-PP1 phosphatase complex, composed of PPP1R10/PNUTS, TOX4, WDR82 and PPP1CA or PPP1CB or PPP1CC. Interacts with PPP1R10/PNUTS. Interacts with FOXO1 and CREB1 (increased by cAMP); FOXO1 and CREB1 are required for full induction of TOX4-dependent activity and the interactions are inhibited by insulin.

It localises to the nucleus. Its subcellular location is the chromosome. In liver, recruited to target gene promoters following treatment with dexamethasone and cAMP. Binding is decreased in presence of insulin. Transcription factor that modulates cell fate reprogramming from the somatic state to the pluripotent and neuronal fate. In liver, controls the expression of hormone-regulated gluconeogenic genes such as G6PC1 and PCK1. This regulation is independent of the insulin receptor activation. Also acts as a regulatory component of protein phosphatase 1 (PP1) complexes. Component of the PNUTS-PP1 protein phosphatase complex, a PP1 complex that regulates RNA polymerase II transcription pause-release. PNUTS-PP1 also plays a role in the control of chromatin structure and cell cycle progression during the transition from mitosis into interphase. The sequence is that of TOX high mobility group box family member 4 (Tox4) from Rattus norvegicus (Rat).